The chain runs to 270 residues: Cytochrome c oxidase subunit 3 (270 aa).

Helical transmembrane passes span 21-41 (PWPF…VLYF), 46-66 (GSLV…FVWW), 90-110 (GIML…WAFF), 131-151 (FFSP…SGCA), 167-187 (AIFS…FQIY), 205-225 (FFMI…FLFV), and 248-268 (WYWH…YWWG).

This sequence belongs to the cytochrome c oxidase subunit 3 family. As to quaternary structure, component of the cytochrome c oxidase (complex IV, CIV), a multisubunit enzyme composed of a catalytic core of 3 subunits and several supernumerary subunits. The complex exists as a monomer or a dimer and forms supercomplexes (SCs) in the inner mitochondrial membrane with ubiquinol-cytochrome c oxidoreductase (cytochrome b-c1 complex, complex III, CIII).

It is found in the mitochondrion inner membrane. It carries out the reaction 4 Fe(II)-[cytochrome c] + O2 + 8 H(+)(in) = 4 Fe(III)-[cytochrome c] + 2 H2O + 4 H(+)(out). In terms of biological role, component of the cytochrome c oxidase, the last enzyme in the mitochondrial electron transport chain which drives oxidative phosphorylation. The respiratory chain contains 3 multisubunit complexes succinate dehydrogenase (complex II, CII), ubiquinol-cytochrome c oxidoreductase (cytochrome b-c1 complex, complex III, CIII) and cytochrome c oxidase (complex IV, CIV), that cooperate to transfer electrons derived from NADH and succinate to molecular oxygen, creating an electrochemical gradient over the inner membrane that drives transmembrane transport and the ATP synthase. Cytochrome c oxidase is the component of the respiratory chain that catalyzes the reduction of oxygen to water. Electrons originating from reduced cytochrome c in the intermembrane space (IMS) are transferred via the dinuclear copper A center (CU(A)) of subunit 2 and heme A of subunit 1 to the active site in subunit 1, a binuclear center (BNC) formed by heme A3 and copper B (CU(B)). The BNC reduces molecular oxygen to 2 water molecules using 4 electrons from cytochrome c in the IMS and 4 protons from the mitochondrial matrix. The sequence is that of Cytochrome c oxidase subunit 3 (COX3) from Cyanidium caldarium (Red alga).